The chain runs to 1440 residues: Pentatricopeptide repeat-containing protein At3g18110, chloroplastic (1440 aa).

A chloroplast-targeting transit peptide spans 1-44 (MAVSAGALAFPALSVRATLNPEIKDEQANISSTTSSSQKFTYSR). Residues 63–72 (TPSQTLSSPV) are compositionally biased toward polar residues. Positions 63-84 (TPSQTLSSPVSPIAGTPDSGDV) are disordered. PPR repeat units lie at residues 224 to 258 (RVQV…GCVP), 259 to 295 (DLIS…GLRP), 296 to 330 (DAIT…RCQP), 331 to 365 (DLWT…GFFP), 366 to 400 (DAVT…GFGK), 401 to 431 (DEMT…MKGL), 437 to 471 (DAIT…GIKP), 472 to 506 (TLQT…GTKP), 507 to 541 (DNLA…GHTP), 542 to 572 (SYTL…MEEL), 608 to 638 (ENDT…LKEH), 643 to 678 (KRLI…GWCF), 680 to 714 (SSTM…GCEA), 715 to 749 (SESV…GFHF), 751 to 785 (CSPM…GRTP), 786 to 820 (DLKT…GPSP), 821 to 855 (TVES…GFKI), 856 to 890 (SKSS…GYLP), 891 to 925 (TIRL…NFKV), 926 to 960 (ELAI…GLEP), 961 to 995 (DETT…GLDP), 996 to 1030 (KLDT…GLKL), 1031 to 1065 (DRSF…GIEP), 1066 to 1100 (TLAT…EVEL), and 1101 to 1135 (TTLP…GLEP). Residues 1419 to 1440 (KKKKMGNETNGINTRRKFVRSK) form a disordered region.

The protein belongs to the PPR family. P subfamily.

Its subcellular location is the plastid. It is found in the chloroplast. In terms of biological role, may play a role in embryogenesis. This is Pentatricopeptide repeat-containing protein At3g18110, chloroplastic (EMB1270) from Arabidopsis thaliana (Mouse-ear cress).